The chain runs to 136 residues: Small ribosomal subunit protein uS19 (136 aa).

Residues 114-136 (RSRVSHGSAGVGATRSSKFVPLK) form a disordered region.

Belongs to the universal ribosomal protein uS19 family.

In terms of biological role, protein S19 forms a complex with S13 that binds strongly to the 16S ribosomal RNA. This chain is Small ribosomal subunit protein uS19, found in Methanosarcina barkeri (strain Fusaro / DSM 804).